The chain runs to 174 residues: uncharacterized protein (174 aa).

An N-acetyltransferase domain is found at 42–174 (SSNKNINLYE…GVKGMFWYPR (133 aa)).

This sequence belongs to the acetyltransferase family. Ycf52 subfamily.

It is found in the plastid. Its subcellular location is the chloroplast. This is an uncharacterized protein from Pyropia yezoensis (Susabi-nori).